The chain runs to 973 residues: UvrABC system protein A (973 aa).

Residue 34–41 (GLSGSGKS) participates in ATP binding. ABC transporter domains follow at residues 331–609 (WAKS…PKSL) and 629–958 (PKKG…HFLK). 662 to 669 (GVSGGGKS) is an ATP binding site. The C4-type zinc finger occupies 761–787 (CEACQGDGVIKIEMHFLPDVYVTCDVC).

The protein belongs to the ABC transporter superfamily. UvrA family. As to quaternary structure, forms a heterotetramer with UvrB during the search for lesions.

It localises to the cytoplasm. In terms of biological role, the UvrABC repair system catalyzes the recognition and processing of DNA lesions. UvrA is an ATPase and a DNA-binding protein. A damage recognition complex composed of 2 UvrA and 2 UvrB subunits scans DNA for abnormalities. When the presence of a lesion has been verified by UvrB, the UvrA molecules dissociate. The protein is UvrABC system protein A of Agrobacterium fabrum (strain C58 / ATCC 33970) (Agrobacterium tumefaciens (strain C58)).